A 598-amino-acid polypeptide reads, in one-letter code: Torsin-1A-interacting protein 1 (598 aa).

Residues 1-351 (MAGEGRRAEA…PQNASFVKRN (351 aa)) lie on the Nuclear side of the membrane. Disordered regions lie at residues 19 to 254 (VTPR…RSSS) and 267 to 314 (QNFT…IYGS). Position 60 is a phosphoserine (S60). 2 stretches are compositionally biased toward basic and acidic residues: residues 73–101 (LVDK…EVRE) and 115–124 (RPQEAEEMKT). Phosphoserine is present on residues S135, S143, S154, S156, S157, and S187. The segment covering 205–214 (EATSVQQKVN) has biased composition (polar residues). S216 carries the phosphoserine modification. T221 is subject to Phosphothreonine. A phosphoserine mark is found at S227, S230, and S242. Basic and acidic residues predominate over residues 238–250 (RSRDSDESGDKTT). Polar residues-rich tracts occupy residues 277–287 (SVLSSGYQKTP) and 300–313 (RMQT…SIYG). S320 is subject to Phosphoserine. Residues 322 to 341 (LKSELGNQSPSTSSQQVTGQ) form a disordered region. K323 participates in a covalent cross-link: Glycyl lysine isopeptide (Lys-Gly) (interchain with G-Cter in SUMO2). Polar residues predominate over residues 326-341 (LGNQSPSTSSQQVTGQ). At S330 the chain carries Phosphoserine. Residues 352–372 (WWWLLPLIAALASGSFWFFST) form a helical membrane-spanning segment. The interaction with TOR1A stretch occupies residues 371–598 (STPEVETTAV…ENALKRGICL (228 aa)). At 373–598 (PEVETTAVQE…ENALKRGICL (226 aa)) the chain is on the perinuclear space side. Residues 374–450 (EVETTAVQEF…SEQIADAYSS (77 aa)) adopt a coiled-coil conformation. N414 is a glycosylation site (N-linked (GlcNAc...) asparagine).

This sequence belongs to the TOR1AIP family. As to quaternary structure, interacts with ATP1B4. Interacts with TOR1A (ATP-bound). Interacts with TOR1B, TOR2A and TOR3A.

The protein localises to the nucleus inner membrane. Functionally, required for nuclear membrane integrity. Induces TOR1A and TOR1B ATPase activity and is required for their location on the nuclear membrane. Binds to A- and B-type lamins. Possible role in membrane attachment and assembly of the nuclear lamina. This chain is Torsin-1A-interacting protein 1 (TOR1AIP1), found in Pongo abelii (Sumatran orangutan).